The chain runs to 735 residues: ATP-dependent DNA helicase Hel308 (735 aa).

Residues Q32 and 50 to 57 (APTGSGKT) each bind ATP. A Helicase ATP-binding domain is found at 37–201 (QAGVEKGENL…WIGGKIVESS (165 aa)). Positions 146-149 (DEIH) match the DEAH box motif. The region spanning 235 to 431 (DLDLAAEAIE…GLRGLRHFIL (197 aa)) is the Helicase C-terminal domain.

Belongs to the helicase family. Hel308 subfamily. As to quaternary structure, monomer.

It carries out the reaction Couples ATP hydrolysis with the unwinding of duplex DNA by translocating in the 3'-5' direction.. The enzyme catalyses ATP + H2O = ADP + phosphate + H(+). Its function is as follows. DNA-dependent ATPase and 3'-5' DNA helicase that may be involved in repair of stalled replication forks. The polypeptide is ATP-dependent DNA helicase Hel308 (Aeropyrum pernix (strain ATCC 700893 / DSM 11879 / JCM 9820 / NBRC 100138 / K1)).